Consider the following 259-residue polypeptide: Virulence plasmid ParA family protein pGP5-D (259 aa).

Position 9-16 (9-16) interacts with ATP; that stretch reads FKGGTGKT.

This sequence belongs to the ParA family.

This chain is Virulence plasmid ParA family protein pGP5-D, found in Chlamydia psittaci (Chlamydophila psittaci).